Reading from the N-terminus, the 900-residue chain is Alanine--tRNA ligase (900 aa).

Zn(2+) contacts are provided by H604, H608, C708, and H712.

Belongs to the class-II aminoacyl-tRNA synthetase family. Zn(2+) is required as a cofactor.

Its subcellular location is the cytoplasm. The catalysed reaction is tRNA(Ala) + L-alanine + ATP = L-alanyl-tRNA(Ala) + AMP + diphosphate. Its function is as follows. Catalyzes the attachment of alanine to tRNA(Ala) in a two-step reaction: alanine is first activated by ATP to form Ala-AMP and then transferred to the acceptor end of tRNA(Ala). Also edits incorrectly charged Ser-tRNA(Ala) and Gly-tRNA(Ala) via its editing domain. This is Alanine--tRNA ligase from Saccharolobus islandicus (strain Y.G.57.14 / Yellowstone #1) (Sulfolobus islandicus).